The following is a 254-amino-acid chain: Guanylate kinase (254 aa).

In terms of domain architecture, Guanylate kinase-like spans 64–243; the sequence is KHLVVLAGPT…AAREVVDLMM (180 aa). 71–78 lines the ATP pocket; sequence GPTAVGKG.

Belongs to the guanylate kinase family.

It is found in the cytoplasm. The catalysed reaction is GMP + ATP = GDP + ADP. Essential for recycling GMP and indirectly, cGMP. The chain is Guanylate kinase from Leifsonia xyli subsp. xyli (strain CTCB07).